A 392-amino-acid polypeptide reads, in one-letter code: L-rhamnonate dehydratase (392 aa).

Positions 22 and 48 each coordinate substrate. Positions 214, 240, and 268 each coordinate Mg(2+). Catalysis depends on histidine 318, which acts as the Proton acceptor. Glutamate 338 contributes to the substrate binding site.

Belongs to the mandelate racemase/muconate lactonizing enzyme family. RhamD subfamily. Homooctamer; tetramer of dimers. It depends on Mg(2+) as a cofactor.

It carries out the reaction L-rhamnonate = 2-dehydro-3-deoxy-L-rhamnonate + H2O. Functionally, catalyzes the dehydration of L-rhamnonate to 2-keto-3-deoxy-L-rhamnonate (KDR). The polypeptide is L-rhamnonate dehydratase (Paraburkholderia phymatum (strain DSM 17167 / CIP 108236 / LMG 21445 / STM815) (Burkholderia phymatum)).